Reading from the N-terminus, the 238-residue chain is Large ribosomal subunit protein uL2 (238 aa).

The tract at residues 199–238 is disordered; the sequence is PHGGGLHQSVSRSSTVARNTPPGRKVGHIAARRTGRRDRK. Over residues 206–216 the composition is skewed to polar residues; it reads QSVSRSSTVAR. Residues 223–238 are compositionally biased toward basic residues; that stretch reads KVGHIAARRTGRRDRK.

The protein belongs to the universal ribosomal protein uL2 family. In terms of assembly, part of the 50S ribosomal subunit. Forms a bridge to the 30S subunit in the 70S ribosome.

Functionally, one of the primary rRNA binding proteins. Required for association of the 30S and 50S subunits to form the 70S ribosome, for tRNA binding and peptide bond formation. It has been suggested to have peptidyltransferase activity; this is somewhat controversial. Makes several contacts with the 16S rRNA in the 70S ribosome. This is Large ribosomal subunit protein uL2 from Metallosphaera sedula (strain ATCC 51363 / DSM 5348 / JCM 9185 / NBRC 15509 / TH2).